The following is a 335-amino-acid chain: Tetraacyldisaccharide 4'-kinase (335 aa).

62 to 69 contacts ATP; that stretch reads NVGGTGKT.

It belongs to the LpxK family.

It catalyses the reaction a lipid A disaccharide + ATP = a lipid IVA + ADP + H(+). It functions in the pathway glycolipid biosynthesis; lipid IV(A) biosynthesis; lipid IV(A) from (3R)-3-hydroxytetradecanoyl-[acyl-carrier-protein] and UDP-N-acetyl-alpha-D-glucosamine: step 6/6. Its function is as follows. Transfers the gamma-phosphate of ATP to the 4'-position of a tetraacyldisaccharide 1-phosphate intermediate (termed DS-1-P) to form tetraacyldisaccharide 1,4'-bis-phosphate (lipid IVA). The protein is Tetraacyldisaccharide 4'-kinase of Methylobacillus flagellatus (strain ATCC 51484 / DSM 6875 / VKM B-1610 / KT).